The chain runs to 521 residues: Beta-glucosidase 11 (521 aa).

The signal sequence occupies residues 1-23 (MKLLSNSLMFLPLLALALTAVSS). Residues Q45, H144, and 189–190 (NE) contribute to the a beta-D-glucoside site. E190 serves as the catalytic Proton donor. Cysteines 209 and 217 form a disulfide. N-linked (GlcNAc...) asparagine glycosylation is found at N216 and N221. Y356 is an a beta-D-glucoside binding site. N-linked (GlcNAc...) asparagine glycosylation is found at N364 and N388. Residues E422, W466, and F482 each coordinate a beta-D-glucoside. The Nucleophile role is filled by E422.

The protein belongs to the glycosyl hydrolase 1 family.

It catalyses the reaction Hydrolysis of terminal, non-reducing beta-D-glucosyl residues with release of beta-D-glucose.. This Arabidopsis thaliana (Mouse-ear cress) protein is Beta-glucosidase 11.